Reading from the N-terminus, the 210-residue chain is N-(5'-phosphoribosyl)anthranilate isomerase (210 aa).

Belongs to the TrpF family.

It catalyses the reaction N-(5-phospho-beta-D-ribosyl)anthranilate = 1-(2-carboxyphenylamino)-1-deoxy-D-ribulose 5-phosphate. It participates in amino-acid biosynthesis; L-tryptophan biosynthesis; L-tryptophan from chorismate: step 3/5. This Eremothecium gossypii (strain ATCC 10895 / CBS 109.51 / FGSC 9923 / NRRL Y-1056) (Yeast) protein is N-(5'-phosphoribosyl)anthranilate isomerase (TRP1).